We begin with the raw amino-acid sequence, 177 residues long: Large ribosomal subunit protein uL6 (177 aa).

Belongs to the universal ribosomal protein uL6 family. As to quaternary structure, part of the 50S ribosomal subunit.

Its function is as follows. This protein binds to the 23S rRNA, and is important in its secondary structure. It is located near the subunit interface in the base of the L7/L12 stalk, and near the tRNA binding site of the peptidyltransferase center. This is Large ribosomal subunit protein uL6 from Methylocella silvestris (strain DSM 15510 / CIP 108128 / LMG 27833 / NCIMB 13906 / BL2).